Here is a 1552-residue protein sequence, read N- to C-terminus: ABC multidrug transporter lscH (1552 aa).

A run of 2 helical transmembrane segments spans residues 32 to 52 (ETILSILPSVLVIVVAPIPII) and 68 to 88 (WFKKISSICFITLSAALVGLW). Asn-91 carries an N-linked (GlcNAc...) asparagine glycan. A run of 8 helical transmembrane segments spans residues 100 to 120 (STPSAVLTFVLSLVYVLLSTI), 158 to 178 (HSAIPPVFASSLALRVVMLLL), 280 to 300 (LFQIGFTYAQPFLITAAIELA), 311 to 331 (NGYGLIGAYILVYSGIAVSVG), 413 to 433 (AACVMSVGFAIVVMVGTVFLA), 457 to 477 (ALASIKWLKISGLTDVAFSVI), 500 to 520 (ILSICTPILGPLLTFAVFAGI), and 528 to 548 (LTIAKVFTAFSIIVLLNSPLA). The 280-residue stretch at 280 to 559 (LFQIGFTYAQ…IVQALPQISG (280 aa)) folds into the ABC transmembrane type-1 1 domain. A disordered region spans residues 573 to 655 (AEERHDPRST…PDANGDSRDA (83 aa)). Polar residues predominate over residues 581–602 (STTTGTSPESNNGSQQTLSDKQ). Asn-592 carries an N-linked (GlcNAc...) asparagine glycan. The 246-residue stretch at 639–884 (GHLADTTPDA…AELGWADRDL (246 aa)) folds into the ABC transporter 1 domain. 676 to 683 (GPVGCGKS) serves as a coordination point for ATP. 2 N-linked (GlcNAc...) asparagine glycosylation sites follow: Asn-719 and Asn-834. The span at 887–912 (QQEKPGKDELNHEHGEYSESAPEKLR) shows a compositional bias: basic and acidic residues. The tract at residues 887–917 (QQEKPGKDELNHEHGEYSESAPEKLRRSQTN) is disordered. 2 helical membrane-spanning segments follow: residues 957–977 (GWLTITIFVIAICVYAFCDSF) and 1005–1025 (AVLGVGAVAACLIGTWQLFII). The 279-residue stretch at 963–1241 (IFVIAICVYA…ATITSWVTLE (279 aa)) folds into the ABC transmembrane type-1 2 domain. A glycan (N-linked (GlcNAc...) asparagine) is linked at Asn-1028. A run of 4 helical transmembrane segments spans residues 1076–1096 (AALGVVMALSFGIAQFILVCV), 1100–1120 (YMAALLPFLLAVLYAIQHFYL), 1184–1204 (WITFAVNMVIMMLAVILIVLT), and 1210–1230 (AIGPGYVGIALSNILAFSATM). In terms of domain architecture, ABC transporter 2 spans 1295–1538 (IELDNVTASY…PTSIFKELYL (244 aa)). N-linked (GlcNAc...) asparagine glycans are attached at residues Asn-1299 and Asn-1313. Position 1328-1335 (1328-1335 (GRTGSGKS)) interacts with ATP.

Belongs to the ABC transporter superfamily. ABCC family. Conjugate transporter (TC 3.A.1.208) subfamily.

The protein localises to the cell membrane. ABC multidrug transporter; part of the gene cluster that mediates the biosynthesis of the lipopeptide antibiotics leucinostatins that show extensive biological activities, including antimalarial, antiviral, antibacterial, antifungal, and antitumor activities, as well as phytotoxic. May be involved in the efflux of leucinostatins. In Purpureocillium lilacinum (Paecilomyces lilacinus), this protein is ABC multidrug transporter lscH.